We begin with the raw amino-acid sequence, 313 residues long: Formimidoylglutamase (313 aa).

Residues His-130, Asp-155, His-157, Asp-159, Asp-241, and Asp-243 each coordinate Mn(2+).

This sequence belongs to the arginase family. Mn(2+) serves as cofactor.

It catalyses the reaction N-formimidoyl-L-glutamate + H2O = formamide + L-glutamate. Its pathway is amino-acid degradation; L-histidine degradation into L-glutamate; L-glutamate from N-formimidoyl-L-glutamate (hydrolase route): step 1/1. Functionally, catalyzes the conversion of N-formimidoyl-L-glutamate to L-glutamate and formamide. This Salmonella typhi protein is Formimidoylglutamase.